The primary structure comprises 1388 residues: Endoribonuclease Dicer homolog 2 (1388 aa).

Positions 31-210 (ALEKAIKQNT…DSYWKKIHEL (180 aa)) constitute a Helicase ATP-binding domain. 44-51 (LETGSGKT) contacts ATP. Residues 152–155 (DECH) carry the DECH box motif. The 165-residue stretch at 380-544 (LGYSSLENIR…PLPDDSDEPL (165 aa)) folds into the Helicase C-terminal domain. Positions 559–645 (SVSLIYHYCS…VPDMVVAETV (87 aa)) constitute a Dicer dsRNA-binding fold domain. Residues 805–935 (TSHEVLEKHE…LPPELCHVIL (131 aa)) enclose the PAZ domain. 2 consecutive RNase III domains span residues 962 to 1113 (AYNL…SEGG) and 1149 to 1296 (VGYM…VDSG). Mg(2+) contacts are provided by glutamate 1188, aspartate 1282, and glutamate 1285. The region spanning 1315–1384 (TPETVKLHPV…YKEVLNLLKN (70 aa)) is the DRBM domain.

This sequence belongs to the helicase family. Dicer subfamily. Mg(2+) serves as cofactor. The cofactor is Mn(2+).

Its subcellular location is the nucleus. It localises to the cytoplasm. Ribonuclease (RNase) III involved in RNA-mediated post-transcriptional gene silencing (PTGS). Involved in the processing of natural small interfering RNAs (nat-siRNAs, derived from cis-natural antisense transcripts) by cleaving small dsRNAs into 24 nucleotide nat-siRNAs. Plays an essential role in transitive silencing of transgenes by processing secondary siRNAs. This pathway, which requires DCL4 and RDR6, amplifies silencing by using the target RNA as substrate to generate secondary siRNAs, providing an efficient mechanism for long-distance silencing. May participate with DCL3 in the production of 24 nucleotide repeat-associated siRNAs (ra-siRNAs) which derive from heterochromatin and DNA repeats such as transposons. Plays a role in antiviral RNA silencing. Involved in the production of viral siRNAs derived from the turnip crinkle virus (TCV) and tobacco rattle virus (TRV). Targeted by the viral silencing suppressor (VSR) protein 2b of the cucumber mosaic virus (CMV) that inactivates DCL2 function in RNA silencing. Does not seem to be involved in microRNAs (miRNAs) processing. In Arabidopsis thaliana (Mouse-ear cress), this protein is Endoribonuclease Dicer homolog 2.